The following is a 161-amino-acid chain: uncharacterized protein (161 aa).

Positions 1–10 (MSKQQEQDTP) are enriched in polar residues. 3 disordered regions span residues 1 to 20 (MSKQ…QRLQ), 55 to 84 (KKTR…MSDE), and 118 to 161 (LLQQ…ANNS). Residues 82–107 (SDEEYARQLQEEMDRLDASIQMDKEA) are a coiled coil. Over residues 144–161 (QQSSNTTTSSSCQSANNS) the composition is skewed to low complexity.

This is an uncharacterized protein from Caenorhabditis elegans.